We begin with the raw amino-acid sequence, 1048 residues long: PH and SEC7 domain-containing protein 3 (1048 aa).

Residues 36 to 45 show a composition bias toward basic and acidic residues; sequence SEGKAPDTSD. The disordered stretch occupies residues 36–57; that stretch reads SEGKAPDTSDHGGSTLLPPNVT. Ser-76 bears the Phosphoserine mark. Disordered stretches follow at residues 104–126, 310–342, 364–383, and 395–434; these read LDSV…LKEQ, GGDK…KVPR, SWKA…SPVR, and QENK…PGYT. The segment covering 311–321 has biased composition (basic and acidic residues); that stretch reads GDKRETQHPID. A compositionally biased stretch (basic and acidic residues) spans 397–423; the sequence is NKQHLEKTPKPERDRERISEQEEHVKG. An SEC7 domain is found at 534–734; it reads TKGTPEIAFW…KALYNSIKNE (201 aa). The span at 741–758 shows a compositional bias: basic and acidic residues; sequence DDEEKKKSPSESTEEKAN. Positions 741-769 are disordered; the sequence is DDEEKKKSPSESTEEKANGTHPKTISRIG. Ser-770 bears the Phosphoserine mark. In terms of domain architecture, PH spans 785 to 898; it reads AVYKSGFLAR…WINKINCVAA (114 aa). The stretch at 922 to 952 forms a coiled coil; the sequence is ATTTKLSQEEQLKSHESKLKQITTELAEHRS. Residues 999 to 1048 form a disordered region; the sequence is DESEAAGLKKSHSSPSLNPDTSPITAKVKRNVSERKDHRPETPSIKQKVT. A phosphoserine mark is found at Ser-1009, Ser-1011, Ser-1012, Ser-1014, and Ser-1020. Positions 1011 to 1022 are enriched in polar residues; it reads SSPSLNPDTSPI. Basic and acidic residues predominate over residues 1029–1039; the sequence is NVSERKDHRPE.

As to expression, isoform 2 is expressed in epididymis (at protein level).

It localises to the cell membrane. The protein resides in the cell projection. It is found in the ruffle membrane. The protein localises to the postsynaptic density. Its function is as follows. Guanine nucleotide exchange factor for ARF6. The sequence is that of PH and SEC7 domain-containing protein 3 (PSD3) from Homo sapiens (Human).